Here is a 311-residue protein sequence, read N- to C-terminus: Heparan sulfate glucosamine 3-O-sulfotransferase 1 (311 aa).

The N-terminal stretch at 1-20 (MTLLLLGAVLLVAQPQLVHS) is a signal peptide. Asparagine 52 is a glycosylation site (N-linked (GlcNAc...) asparagine). 3'-phosphoadenylyl sulfate is bound by residues 68–72 (KGGTR), arginine 151, and serine 159. Residues asparagine 196, asparagine 246, and asparagine 253 are each glycosylated (N-linked (GlcNAc...) asparagine). Residue tyrosine 259 participates in 3'-phosphoadenylyl sulfate binding. Cysteine 260 and cysteine 269 are disulfide-bonded. 274 to 278 (KGRAH) provides a ligand contact to 3'-phosphoadenylyl sulfate.

The protein belongs to the sulfotransferase 1 family.

The protein localises to the golgi apparatus lumen. It carries out the reaction alpha-D-glucosaminyl-[heparan sulfate](n) + 3'-phosphoadenylyl sulfate = 3-sulfo-alpha-D-glucosaminyl-[heparan sulfate](n) + adenosine 3',5'-bisphosphate + H(+). In terms of biological role, sulfotransferase that utilizes 3'-phospho-5'-adenylyl sulfate (PAPS) to catalyze the transfer of a sulfo group to position 3 of glucosamine residues in heparan. Catalyzes the rate limiting step in the biosynthesis of heparan sulfate (HSact). This modification is a crucial step in the biosynthesis of anticoagulant heparan sulfate as it completes the structure of the antithrombin pentasaccharide binding site. This chain is Heparan sulfate glucosamine 3-O-sulfotransferase 1 (Hs3st1), found in Mus musculus (Mouse).